The sequence spans 179 residues: Adenine phosphoribosyltransferase (179 aa).

This sequence belongs to the purine/pyrimidine phosphoribosyltransferase family. In terms of assembly, homodimer.

Its subcellular location is the cytoplasm. The enzyme catalyses AMP + diphosphate = 5-phospho-alpha-D-ribose 1-diphosphate + adenine. The protein operates within purine metabolism; AMP biosynthesis via salvage pathway; AMP from adenine: step 1/1. Its function is as follows. Catalyzes a salvage reaction resulting in the formation of AMP, that is energically less costly than de novo synthesis. In Azorhizobium caulinodans (strain ATCC 43989 / DSM 5975 / JCM 20966 / LMG 6465 / NBRC 14845 / NCIMB 13405 / ORS 571), this protein is Adenine phosphoribosyltransferase.